We begin with the raw amino-acid sequence, 340 residues long: Insulin gene enhancer protein ISL-2B (340 aa).

LIM zinc-binding domains are found at residues 9-62 (CVGC…CKRD) and 71-125 (CAKC…RADH). Residues 172–231 (TTRVRTVLNEKQLHTLRTCYNANPRPDALMKEQLVEMTGLSPRVIRVWFQNKRCKDKKRT) constitute a DNA-binding region (homeobox). Over residues 307–317 (ESGSMGNSSGS) the composition is skewed to low complexity. Residues 307–340 (ESGSMGNSSGSDVTSLSSQLPDTPNSMVPSPMDT) are disordered. The span at 318-340 (DVTSLSSQLPDTPNSMVPSPMDT) shows a compositional bias: polar residues.

The protein localises to the nucleus. Its function is as follows. Binds to one of the cis-acting domain of the insulin gene enhancer. May be involved in subtype specialization of primary motoneurons. This Oncorhynchus tshawytscha (Chinook salmon) protein is Insulin gene enhancer protein ISL-2B (isl2b).